The following is a 422-amino-acid chain: Telomerase-associated protein of 50 kDa (422 aa).

As to quaternary structure, component of the telomerase holoenzyme complex, composed of the catalytic core (the catalytic subunit TERT, the telomerase RNA template component TER and TAP65/p65), which is associated with two heterotrimeric subcomplexes: (i) the replication protein A (RPA)-related subcomplex, composed of TEB1, RPA2/TEB2 and RPA3/TEB3 and (ii) the CST-like subcomplex, composed of TAP75/p75, TAP45/p45 and TAP19/p19. TEB1 and the CST-like subcomplex are tethered to the catalytic core by TAP50/p50.

It is found in the chromosome. The protein resides in the telomere. In terms of biological role, tethering component of the holoenzyme telomerase ribonucleoprotein (RNP) complex. Telomerase is an essential ribonucleoprotein enzyme that copies new telomeric repeats onto chromosome ends by repetitively synthesizing the short telomere-repeat sequence 5'-TTGGGG-3' using an RNA template component TER. In the telomerase holoenzyme complex, acts as a hub that anchors the two heterotrimeric subcomplexes with the catalytic core. This is Telomerase-associated protein of 50 kDa from Tetrahymena thermophila (strain SB210).